The primary structure comprises 383 residues: tRNA-specific 2-thiouridylase MnmA (383 aa).

ATP is bound by residues 9–16 (GMSGGVDS) and methionine 35. The segment at 95 to 97 (NPD) is interaction with target base in tRNA. The active-site Nucleophile is the cysteine 100. A disulfide bridge links cysteine 100 with cysteine 196. Glycine 124 is a binding site for ATP. Residues 146–148 (KDQ) form an interaction with tRNA region. Cysteine 196 serves as the catalytic Cysteine persulfide intermediate. The interval 308–309 (RY) is interaction with tRNA.

It belongs to the MnmA/TRMU family.

It is found in the cytoplasm. The enzyme catalyses S-sulfanyl-L-cysteinyl-[protein] + uridine(34) in tRNA + AH2 + ATP = 2-thiouridine(34) in tRNA + L-cysteinyl-[protein] + A + AMP + diphosphate + H(+). Its function is as follows. Catalyzes the 2-thiolation of uridine at the wobble position (U34) of tRNA, leading to the formation of s(2)U34. The polypeptide is tRNA-specific 2-thiouridylase MnmA (Burkholderia mallei (strain NCTC 10247)).